A 97-amino-acid polypeptide reads, in one-letter code: Scorpine-like peptide Ev37 (97 aa).

Positions 1–19 (MNSKLTVIVLLALITIASC) are cleaved as a signal peptide. In terms of domain architecture, BetaSPN-type CS-alpha/beta spans 55–95 (QNLCAFNVDTVGMCDADCKRQGKAKGVCHGTKCKCDVELSY). 3 cysteine pairs are disulfide-bonded: C58/C82, C68/C87, and C72/C89.

This sequence belongs to the long chain scorpion toxin family. Class 3 subfamily. Expressed by the venom gland.

The protein resides in the secreted. In terms of biological role, selectively inhibits Kv1.3/KCNA3 channel (IC(50)=0.95 uM). Both N-terminal and C-terminal domains are likely involved in the interaction with Kv1.3/KCNA3, since neither its N-terminal domain (1-36) nor its C-terminal domain (37-78) block Kv1.3/KCNA3 channel. This is Scorpine-like peptide Ev37 from Euscorpiops validus (Scorpion).